The primary structure comprises 647 residues: Acetyl-coenzyme A synthetase (647 aa).

CoA-binding positions include 190–193 (RGGR) and Thr310. ATP contacts are provided by residues 386–388 (GEP), 410–415 (DTWWQT), Asp499, and Arg514. A CoA-binding site is contributed by Ser522. ATP is bound at residue Arg525. The Mg(2+) site is built by Val536, His538, and Val541. CoA is bound at residue Arg583. Lys608 carries the N6-acetyllysine modification.

This sequence belongs to the ATP-dependent AMP-binding enzyme family. The cofactor is Mg(2+). Post-translationally, acetylated. Deacetylation by the SIR2-homolog deacetylase activates the enzyme.

It carries out the reaction acetate + ATP + CoA = acetyl-CoA + AMP + diphosphate. Its function is as follows. Catalyzes the conversion of acetate into acetyl-CoA (AcCoA), an essential intermediate at the junction of anabolic and catabolic pathways. AcsA undergoes a two-step reaction. In the first half reaction, AcsA combines acetate with ATP to form acetyl-adenylate (AcAMP) intermediate. In the second half reaction, it can then transfer the acetyl group from AcAMP to the sulfhydryl group of CoA, forming the product AcCoA. The chain is Acetyl-coenzyme A synthetase from Xylella fastidiosa (strain Temecula1 / ATCC 700964).